Here is a 285-residue protein sequence, read N- to C-terminus: Polyamine aminopropyltransferase (285 aa).

One can recognise a PABS domain in the interval 5–241 (DNWYIEHFQP…GWWSVTMASK (237 aa)). Position 35 (glutamine 35) interacts with S-methyl-5'-thioadenosine. Spermidine is bound by residues histidine 66 and aspartate 90. Residues aspartate 110 and 141–142 (DG) each bind S-methyl-5'-thioadenosine. Residue aspartate 160 is the Proton acceptor of the active site. 160–163 (DSTD) contacts spermidine. Proline 167 is an S-methyl-5'-thioadenosine binding site.

Belongs to the spermidine/spermine synthase family. Homodimer or homotetramer.

Its subcellular location is the cytoplasm. The enzyme catalyses S-adenosyl 3-(methylsulfanyl)propylamine + putrescine = S-methyl-5'-thioadenosine + spermidine + H(+). Its pathway is amine and polyamine biosynthesis; spermidine biosynthesis; spermidine from putrescine: step 1/1. Its function is as follows. Catalyzes the irreversible transfer of a propylamine group from the amino donor S-adenosylmethioninamine (decarboxy-AdoMet) to putrescine (1,4-diaminobutane) to yield spermidine. The sequence is that of Polyamine aminopropyltransferase from Xanthomonas oryzae pv. oryzae (strain MAFF 311018).